The following is a 517-amino-acid chain: Ribose import ATP-binding protein RbsA 1 (517 aa).

ABC transporter domains lie at 11–251 and 263–507; these read LEMR…VGRD and YDPG…ALAT. 43–50 provides a ligand contact to ATP; the sequence is GENGAGKS.

The protein belongs to the ABC transporter superfamily. Ribose importer (TC 3.A.1.2.1) family. As to quaternary structure, the complex is composed of an ATP-binding protein (RbsA), two transmembrane proteins (RbsC) and a solute-binding protein (RbsB).

Its subcellular location is the cell inner membrane. The enzyme catalyses D-ribose(out) + ATP + H2O = D-ribose(in) + ADP + phosphate + H(+). Part of the ABC transporter complex RbsABC involved in ribose import. Responsible for energy coupling to the transport system. The protein is Ribose import ATP-binding protein RbsA 1 of Burkholderia cenocepacia (strain HI2424).